Here is a 149-residue protein sequence, read N- to C-terminus: Protein K7 (149 aa).

It belongs to the orthopoxvirus OPG044 family. In terms of assembly, interacts with DDX3; this interaction inhibits DDX3 and suppresses DDX3-mediated IFN-beta promoter induction. Interacts with TRAF6 and IRAK2; these interactions suppress TLR-dependent NF-KappaB activation.

The protein resides in the host cytoplasm. Functionally, virulence factor that affects the acute immune response to infection. Bcl-2-like protein which, through its interaction with the DEAD box RNA helicase DDX3X/DDX3, prevents TBK1/IKKepsilon-mediated IRF3 activation. Contributes to virulence by binding to the host TRAF6 and IRAK2 and preventing host NF-kappa-B activation. This Homo sapiens (Human) protein is Protein K7 (OPG044).